A 565-amino-acid polypeptide reads, in one-letter code: Coiled-coil domain-containing protein 17 (565 aa).

Positions 58-87 (IMAQEKSRDQEASTSALKRLTEETAGSPGE) are disordered. Coiled coils occupy residues 97–160 (ARRM…TLGA) and 219–271 (LQLQ…KVLS).

In Mus musculus (Mouse), this protein is Coiled-coil domain-containing protein 17 (Ccdc17).